A 421-amino-acid polypeptide reads, in one-letter code: C2 calcium-dependent domain-containing protein 4C (421 aa).

Disordered regions lie at residues 13 to 97 (RGSG…AKLA), 119 to 140 (DWLS…SLPS), 158 to 228 (HTRR…SPFG), and 250 to 303 (VSQL…TVHV). The span at 215–228 (ESDTGSSAESSPFG) shows a compositional bias: polar residues. Phosphoserine occurs at positions 262, 264, and 273. Residues 305 to 421 (PRGSVRLLAE…LPLTSLLPFL (117 aa)) enclose the C2 domain.

Belongs to the C2CD4 family.

The protein is C2 calcium-dependent domain-containing protein 4C (C2CD4C) of Homo sapiens (Human).